The following is a 585-amino-acid chain: Zinc finger protein C11D3.17 (585 aa).

2 consecutive C2H2-type zinc fingers follow at residues F31 to H53 and I59 to H82. At T553 the chain carries Phosphothreonine.

Its subcellular location is the nucleus. The chain is Zinc finger protein C11D3.17 from Schizosaccharomyces pombe (strain 972 / ATCC 24843) (Fission yeast).